A 448-amino-acid polypeptide reads, in one-letter code: Homogentisate 1,2-dioxygenase (448 aa).

3 residues coordinate Fe cation: His-340, Glu-346, and His-377.

This sequence belongs to the homogentisate dioxygenase family. Fe cation serves as cofactor.

It carries out the reaction homogentisate + O2 = 4-maleylacetoacetate + H(+). Its pathway is amino-acid degradation; L-phenylalanine degradation; acetoacetate and fumarate from L-phenylalanine: step 4/6. In Emericella nidulans (strain FGSC A4 / ATCC 38163 / CBS 112.46 / NRRL 194 / M139) (Aspergillus nidulans), this protein is Homogentisate 1,2-dioxygenase (hmgA).